The following is a 314-amino-acid chain: Small ribosomal subunit protein uS2c (314 aa).

Belongs to the universal ribosomal protein uS2 family.

The protein localises to the plastid. It is found in the chloroplast. This chain is Small ribosomal subunit protein uS2c (rps2), found in Stigeoclonium helveticum (Green alga).